Consider the following 419-residue polypeptide: Serine--tRNA ligase (419 aa).

Residue 226–228 (TSE) participates in L-serine binding. Residues 257–259 (RRE) and Val-273 contribute to the ATP site. Glu-280 contacts L-serine. 344-347 (ELTS) lines the ATP pocket. Thr-379 lines the L-serine pocket.

The protein belongs to the class-II aminoacyl-tRNA synthetase family. Type-1 seryl-tRNA synthetase subfamily. As to quaternary structure, homodimer. The tRNA molecule binds across the dimer.

Its subcellular location is the cytoplasm. The enzyme catalyses tRNA(Ser) + L-serine + ATP = L-seryl-tRNA(Ser) + AMP + diphosphate + H(+). It carries out the reaction tRNA(Sec) + L-serine + ATP = L-seryl-tRNA(Sec) + AMP + diphosphate + H(+). The protein operates within aminoacyl-tRNA biosynthesis; selenocysteinyl-tRNA(Sec) biosynthesis; L-seryl-tRNA(Sec) from L-serine and tRNA(Sec): step 1/1. Functionally, catalyzes the attachment of serine to tRNA(Ser). Is also able to aminoacylate tRNA(Sec) with serine, to form the misacylated tRNA L-seryl-tRNA(Sec), which will be further converted into selenocysteinyl-tRNA(Sec). The sequence is that of Serine--tRNA ligase from Mycolicibacterium vanbaalenii (strain DSM 7251 / JCM 13017 / BCRC 16820 / KCTC 9966 / NRRL B-24157 / PYR-1) (Mycobacterium vanbaalenii).